The primary structure comprises 437 residues: Trigger factor (437 aa).

The region spanning 163-248 is the PPIase FKBP-type domain; it reads GDIAVINFEG…LNQIKAKVLP (86 aa).

The protein belongs to the FKBP-type PPIase family. Tig subfamily.

It is found in the cytoplasm. The catalysed reaction is [protein]-peptidylproline (omega=180) = [protein]-peptidylproline (omega=0). In terms of biological role, involved in protein export. Acts as a chaperone by maintaining the newly synthesized protein in an open conformation. Functions as a peptidyl-prolyl cis-trans isomerase. This Bdellovibrio bacteriovorus (strain ATCC 15356 / DSM 50701 / NCIMB 9529 / HD100) protein is Trigger factor.